The chain runs to 530 residues: Protein P80 (530 aa).

The N-terminal stretch at 1–22 (MKVISGLLFFILISCSLFLVQG) is a signal peptide. A helical membrane pass occupies residues 491 to 511 (MLVAMTFNVALFFAVIAGVLV).

The protein belongs to the SLC31A transporter family.

Its subcellular location is the late endosome membrane. This is Protein P80 (p80) from Dictyostelium discoideum (Social amoeba).